Consider the following 407-residue polypeptide: Methylthioribose kinase (407 aa).

ATP-binding positions include Asn40, Lys57, and 111 to 113 (EDL). Asp229 contacts substrate. Residue 246–248 (DAE) participates in ATP binding. Arg344 provides a ligand contact to substrate.

This sequence belongs to the methylthioribose kinase family. Homodimer.

It catalyses the reaction 5-(methylsulfanyl)-D-ribose + ATP = 5-(methylsulfanyl)-alpha-D-ribose 1-phosphate + ADP + H(+). The protein operates within amino-acid biosynthesis; L-methionine biosynthesis via salvage pathway; S-methyl-5-thio-alpha-D-ribose 1-phosphate from S-methyl-5'-thioadenosine (hydrolase route): step 2/2. Catalyzes the phosphorylation of methylthioribose into methylthioribose-1-phosphate. This is Methylthioribose kinase from Yersinia pseudotuberculosis serotype IB (strain PB1/+).